A 782-amino-acid polypeptide reads, in one-letter code: Structure-specific endonuclease subunit SLX4 (782 aa).

Disordered regions lie at residues 63 to 91 (TPKPVKVSRPGLRKTGSRKSKKNQSMSAM) and 359 to 425 (KEHE…KKSK). The span at 73-84 (GLRKTGSRKSKK) shows a compositional bias: basic residues. Over residues 374-388 (PAQSLTQSQVPSSID) the composition is skewed to polar residues.

Belongs to the SLX4 family. In terms of assembly, forms a heterodimer with SLX1. In terms of processing, phosphorylated in response to DNA damage.

The protein resides in the nucleus. In terms of biological role, regulatory subunit of the SLX1-SLX4 structure-specific endonuclease that resolves DNA secondary structures generated during DNA repair and recombination. Has endonuclease activity towards branched DNA substrates, introducing single-strand cuts in duplex DNA close to junctions with ss-DNA. The chain is Structure-specific endonuclease subunit SLX4 from Scheffersomyces stipitis (strain ATCC 58785 / CBS 6054 / NBRC 10063 / NRRL Y-11545) (Yeast).